We begin with the raw amino-acid sequence, 1191 residues long: Roquin-2 (1191 aa).

7 residues coordinate Zn(2+): cysteine 14, cysteine 17, cysteine 33, histidine 35, cysteine 38, cysteine 50, and aspartate 53. The RING-type; degenerate zinc finger occupies 14–54 (CPICYNEFDENVHKPISLGCSHTVCKTCLNKLHRKACPFDQ). The tract at residues 91 to 170 (ENKHYEVAKK…RTVTELILQH (80 aa)) is HEPN-N. Residues 171–325 (QNPQQLSANL…SIIDKLQSPE (155 aa)) form an ROQ region. The interval 326–396 (SFAKSVQELT…GLVDFIQNYS (71 aa)) is HEPN-C. The C3H1-type zinc-finger motif lies at 410–438 (KYKTSMCRDLRQQGGCPRGTNCTFAHSQE). 2 disordered regions span residues 528–576 (GANG…NSVP) and 644–680 (ESSLPPASMPYADHYSTFSPRDRMNSSPYQPPPPQPY). Positions 530-546 (NGQNAAGPSADSVTENK) are enriched in polar residues. Serine 549 is subject to Phosphoserine. Residues 554 to 576 (PVSNVAATSAGPSNVGTELNSVP) are compositionally biased toward polar residues. Phosphoserine is present on residues serine 808, serine 983, and serine 1119.

Interacts with EDC4. Interacts with CCR4-NOT deadenylase complex. Interacts with MAP3K5; the interaction is probably stimulus-dependent. In terms of processing, proteolytically cleaved after Arg-509 and Arg-585 by MALT1 in activated CD4(+) T cells; cleavage at Arg-509 and Arg-585 is critical for promoting RC3H1 degradation in response to T-cell receptor (TCR) stimulation, and hence is necessary for prolonging the stability of a set of mRNAs controlling Th17 cell differentiation. In terms of tissue distribution, expressed in spleen, testis, ovary and small intestine.

The protein resides in the cytoplasm. It localises to the P-body. It carries out the reaction S-ubiquitinyl-[E2 ubiquitin-conjugating enzyme]-L-cysteine + [acceptor protein]-L-lysine = [E2 ubiquitin-conjugating enzyme]-L-cysteine + N(6)-ubiquitinyl-[acceptor protein]-L-lysine.. Its pathway is protein modification; protein ubiquitination. Its activity is regulated as follows. Binding to dsRNA, but not CDE RNA, crosstalks with the E3 ubiquitin ligase activity and may inhibit ubiquitination. In terms of biological role, post-transcriptional repressor of mRNAs containing a conserved stem loop motif, called constitutive decay element (CDE), which is often located in the 3'-UTR, as in HMGXB3, ICOS, IER3, NFKBID, NFKBIZ, PPP1R10, TNF and in many more mRNAs. Binds to CDE and promotes mRNA deadenylation and degradation. This process does not involve miRNAs. In follicular helper T (Tfh) cells, represses of ICOS and TNFRSF4 expression, thus preventing spontaneous Tfh cell differentiation, germinal center B-cell differentiation in the absence of immunization and autoimmunity. In resting or LPS-stimulated macrophages, controls inflammation by suppressing TNF expression. Also recognizes CDE in its own mRNA and in that of paralogous RC3H1, possibly leading to feedback loop regulation. miRNA-binding protein that regulates microRNA homeostasis. Enhances DICER-mediated processing of pre-MIR146a but reduces mature MIR146a levels through an increase of 3' end uridylation. Both inhibits ICOS mRNA expression and they may act together to exert the suppression. Acts as a ubiquitin E3 ligase. Pairs with E2 enzymes UBE2B, UBE2D2, UBE2E2, UBE2E3, UBE2G2, UBE2K and UBE2Q2 and produces polyubiquitin chains. Shows the strongest activity when paired with UBE2N:UBE2V1 or UBE2N:UBE2V2 E2 complexes and generate both short and long polyubiquitin chains. Involved in the ubiquitination of MAP3K5. Able to interact with double-stranded RNA (dsRNA). The polypeptide is Roquin-2 (RC3H2) (Homo sapiens (Human)).